Here is a 103-residue protein sequence, read N- to C-terminus: Large ribosomal subunit protein bL21 (103 aa).

It belongs to the bacterial ribosomal protein bL21 family. Part of the 50S ribosomal subunit. Contacts protein L20.

Its function is as follows. This protein binds to 23S rRNA in the presence of protein L20. This is Large ribosomal subunit protein bL21 from Paracidovorax citrulli (strain AAC00-1) (Acidovorax citrulli).